The following is a 478-amino-acid chain: Pyrrolysine--tRNA ligase (478 aa).

The tract at residues 106–188 (VMPKSVARTP…TSAMPASTSA (83 aa)) is disordered. Positions 122 to 132 (APVQTLPSESQ) are enriched in polar residues. Over residues 133–188 (PAPTTPISASTTAPASTSTTAPAPASTTAPAPASTTAPASASTTISTSAMPASTSA) the composition is skewed to low complexity.

The protein belongs to the class-II aminoacyl-tRNA synthetase family.

It is found in the cytoplasm. It catalyses the reaction tRNA(Pyl) + L-pyrrolysine + ATP = L-pyrrolysyl-tRNA(Pyl) + AMP + diphosphate. Its function is as follows. Catalyzes the attachment of pyrrolysine to tRNA(Pyl). Pyrrolysine is a lysine derivative encoded by the termination codon UAG. This chain is Pyrrolysine--tRNA ligase, found in Methanosarcina thermophila.